Consider the following 113-residue polypeptide: Ig heavy chain V-III region A4 (113 aa).

The Ig-like domain maps to E1–V113. Residues C22 and C98 are joined by a disulfide bond.

In Mus musculus (Mouse), this protein is Ig heavy chain V-III region A4.